A 283-amino-acid chain; its full sequence is DNA repair protein RecO (283 aa).

Over residues 254 to 264 (SSPASVGSSAT) the composition is skewed to polar residues. The interval 254-283 (SSPASVGSSATRYFAQGDTDENDRDPPGAR) is disordered.

Belongs to the RecO family.

In terms of biological role, involved in DNA repair and RecF pathway recombination. The protein is DNA repair protein RecO of Roseiflexus sp. (strain RS-1).